Here is a 159-residue protein sequence, read N- to C-terminus: Phosphopantetheine adenylyltransferase (159 aa).

Thr-9 contacts substrate. Residues 9–10 and His-17 contribute to the ATP site; that span reads TF. Positions 41, 73, and 87 each coordinate substrate. ATP is bound by residues 88 to 90, Glu-98, and 123 to 129; these read GLR and YSFISST.

This sequence belongs to the bacterial CoaD family. Homohexamer. Mg(2+) is required as a cofactor.

The protein localises to the cytoplasm. It carries out the reaction (R)-4'-phosphopantetheine + ATP + H(+) = 3'-dephospho-CoA + diphosphate. The protein operates within cofactor biosynthesis; coenzyme A biosynthesis; CoA from (R)-pantothenate: step 4/5. Functionally, reversibly transfers an adenylyl group from ATP to 4'-phosphopantetheine, yielding dephospho-CoA (dPCoA) and pyrophosphate. The polypeptide is Phosphopantetheine adenylyltransferase (Pseudomonas aeruginosa (strain LESB58)).